The chain runs to 360 residues: Cytokine receptor-like factor 2 (360 aa).

The first 18 residues, 1-18, serve as a signal peptide directing secretion; that stretch reads MRAVTWAIVAMLLPRVLG. Topologically, residues 27–238 are extracellular; sequence TGGVGDTLSV…PRTPGTPTPP (212 aa). The N-linked (GlcNAc...) asparagine glycan is linked to asparagine 62. A disulfide bond links cysteine 77 and cysteine 90. The Fibronectin type-III domain maps to 123-214; that stretch reads RPRPPWNVTL…PSKWTGVASL (92 aa). Residues asparagine 129 and asparagine 174 are each glycosylated (N-linked (GlcNAc...) asparagine). An intrachain disulfide couples cysteine 185 to cysteine 223. Positions 205-209 match the WSXWS motif motif; sequence PSKWT. The helical transmembrane segment at 239 to 259 threads the bilayer; the sequence is LALACGLAVALLTLVLLLALL. The Cytoplasmic segment spans residues 260–360; that stretch reads RMRRVKEALL…LMGDSGYTTL (101 aa). Residues 268–276 carry the Box 1 motif motif; that stretch reads LLPGVPDPR.

Belongs to the type I cytokine receptor family. Type 5 subfamily. Heterodimer of CRLF2 and IL7R. As to expression, expressed in all tissues examined including brain, thymus, lung, heart, muscle, stomach, small intestine, liver, kidney, spleen, testis and skin. Highest levels in thymus, liver and testis.

The protein resides in the membrane. In terms of biological role, receptor for thymic stromal lymphopoietin (TSLP). Forms a functional complex with TSLP and IL7R which is capable of stimulating cell proliferation through activation of STAT3 and STAT5. Also activates JAK2. Implicated in the development of the hematopoietic system. The protein is Cytokine receptor-like factor 2 (Crlf2) of Rattus norvegicus (Rat).